An 80-amino-acid chain; its full sequence is Large ribosomal subunit protein eL14 (80 aa).

It belongs to the eukaryotic ribosomal protein eL14 family.

This Methanocaldococcus jannaschii (strain ATCC 43067 / DSM 2661 / JAL-1 / JCM 10045 / NBRC 100440) (Methanococcus jannaschii) protein is Large ribosomal subunit protein eL14.